Reading from the N-terminus, the 302-residue chain is Aspartate carbamoyltransferase catalytic subunit (302 aa).

Carbamoyl phosphate is bound by residues arginine 53 and threonine 54. Residue lysine 82 participates in L-aspartate binding. Residues arginine 103, histidine 131, and glutamine 134 each contribute to the carbamoyl phosphate site. 2 residues coordinate L-aspartate: arginine 164 and arginine 223. Residues leucine 260 and proline 261 each coordinate carbamoyl phosphate.

It belongs to the aspartate/ornithine carbamoyltransferase superfamily. ATCase family. Heterooligomer of catalytic and regulatory chains.

The enzyme catalyses carbamoyl phosphate + L-aspartate = N-carbamoyl-L-aspartate + phosphate + H(+). Its pathway is pyrimidine metabolism; UMP biosynthesis via de novo pathway; (S)-dihydroorotate from bicarbonate: step 2/3. Catalyzes the condensation of carbamoyl phosphate and aspartate to form carbamoyl aspartate and inorganic phosphate, the committed step in the de novo pyrimidine nucleotide biosynthesis pathway. In Methanococcus maripaludis (strain DSM 14266 / JCM 13030 / NBRC 101832 / S2 / LL), this protein is Aspartate carbamoyltransferase catalytic subunit.